Consider the following 3036-residue polypeptide: MHLHQVLTGAVNPGDNCYSVGSVGDVPFTAYGSGCDIVILANDFECVQIIPGAKHGNIQVSCVECSNQQGRIAASYGNAVCIFEPLGINSHKRNCQLKCQWLKTGQFFLSSVTYNLAWDPQDNRLLTATDSIQLWAPPGDDILEEEEEIDNTVPPVLNDWKCVWQCKTSVSVHLMEWSPDGEYFATAGKDDCLLKVWYPMTGWKSSIIPQDHHEVKRRQSSTQFSFVYLAHPRAVTGFSWRKTSKYMPRGSVCNVLLTSCHDGVCRLWAETLLPEDCLLGEQICETTTSSIASSLSHAGRHKDRIQHALETIHHLKNLRKGQRRSSVLVTHAELMPDQTAMHEVQRHISHHANALCHFHIAASINPATDIPNVLVGTAFNVDDGNGGFVVHWLNNKEFHFTSSTEVFMHQLRKLSDKQVDHENDDADREDEEHSQEDRERGLHMKLDHDLSLDRESEAGTGSSEHEDGEREGSPRTYSRLSVPMPLPTVLLDRKIETLLTEWNKNPDMLFTIHPVDGTFLVWHVKYLDEYNPGIFRQVQVSFSSRIPVAFPSGDASSLSKNIMMYACINATKDSHHTLLHQEGMSVGSPHGSQPHSRSHSTHMNILAPTVMMISKHIDGSLNQWAVTFADKSAFTTVLTVSHKFRYCGHRFHLNDLACHSVLPLLLTSSHHNALLTPELDCQWDSDNKLSRLMDPVKHIKGSSKQPLRNAATRTFHDPNAIYSELILWRVDPIGPLSYTGGVSELARINSLHTSAFSNVAWLPTLIPSYCLGTYCNSASACFVASDGKNLRLYQAVVDARKLLDELSDPESSKLIGEVFNIVSQQSTARPGCIIELDAITNQCGSNTQLLHVFQEDFIIGYKPHKEDMEKKETEIFFQPSQGYRPPPFSEKFFLVVIEKDSNNNSILHMWHLHLKSVQACLAKASEGASSESLLSVPGQKNVDSSPETSPSVSPMPHSSSIANLQTASKLILSSRLVYSQPLDLPESVEVIRATPSAGHLSSSSIYPVCLAPYLVVTTCSDNKVRFWKCCMEANPECNKSDEKEIYHWKRWPLMNDEGEDNSSTVSIVGRPVAVSCSYTGRLAVAYKQPIHHNGFVSKEFSMHVCIFECESTGGSEWVLEQTIHLDDLVKVGSVLDSRVSVDSNLFVYSKSDALLSKDRYLIPNIKHLVHLDWVSKEDGSHILTVGVGANIFMYGRLSGIVTEQTNSKDGVAVITLPLGGSIKQGVKSRWVLLRSIDLVSSVDGTPSLPVSLSWVRDGILVVGMDCEMHVYAQWKHAVKFGDTEADSSNAEEAAMQDHSTFKSNMLARKSVVEGTAISDDVFCSPTVIQDGGLFEAAHVLSPTLPQYHPTQLLELMDLGKVRRAKAILSHLVKCIAGEVAIVRDPDAGEGTKRHLSRTISVSGSTAKETVTVGKDGTRDYTEIDSIPPLPLYALLAADQDTSYRISEESTKIPQSYEDQTVSQPEDQYSELFQIQDIPTDDIDLEPEKRENKSKVINLSQYGPAYFGQEHARVLSSHLMHSSLPGLTRLEQMFLVALADTVATTSTELDESRDKSCSGRDTLDECGLRYLLAMRLHTCLLTSLPPLYRVQLLHQGVSTCHFAWAFHSEAEEELINMIPAIQRGDPQWSELRAMGIGWWVRNINTLRRCIEKVAKASFQRNNDALDAALFYLSMKKKAVVWGLFRSQHDEKMTTFFSHNFNEDRWRKAALKNAFSLLGKQRFEQSAAFFLLAGSLKDAIEVCLEKMEDIQLAMVIARLYESEFETSSTYISILNQKILGCQKDGSGFSCKRLHPDPFLRSLAYWVMKDYTRALDTLLEQTPKEDDEHQVIIKSCNPVAFSFYNYLRTHPLLIRRNLASPEGTLATLGLKTEKNFVDKINLIERKLFFTTANAHFKVGCPVLALEVLSKIPKVTKTSALSAKKDQPDFISHRMDDVPSHSKALSDGNGSSGIEWSNVTSSQYDWSQPIVKVDEEPLNLDWGEDHDSALDEEEDDAVGLVMKSTDAREKDKQSDQKASDPNMLLTPQEEDDPEGDTEVDVIAEQLKFRACLKILMTELRTLATGYEVDGGKLRFQLYNWLEKEIAALHEICNHESVIKEYSSKTYSKVESDLLDQEEMVDKPDIGSYERHQIERRRLQAKREHAERRKSWLQKNQDLLRVFLSYCSLHGAQGGGLASVRMELKFLLQESQQETTVKQLQSPLPLPTTLPLLSASIASTKTVIANPVLYLNNHIHDILYTIVQMKTPPHPSIEDVKVHTLHSLAASLSASIYQALCDSHSYSQTEGNQFTGMAYQGLLLSDRRRLRTESIEEHATPNSSPAQWPGVSSLINLLSSAQDEDQPKLNILLCEAVVAVYLSLLIHALATNSSSELFRLAAHPLNNRMWAAVFGGGVKLVVKPRRQSENISAPPVLSEDIDKHRRRFNMRMLVPGRPVKDATPPPVPAERPSYKEKFIPPELSMWDYFVAKPFLPLSDSGVIYDSDESIHSDEEDDAFFSDTQIQEHQDPNSYSWALLHLTMVKLALHNVKNFFPIAGLEFSELPVTSPLGIAVIKNLENWEQILQEKMDQFEGPPPNYINTYPTDLSVGAGPAILRNKAMLEPENTPFKSRDSSAFPVKRLWHFLVKQEVLQETFIRYIFTKKRKQSEVEADLGYPGGKAKVIHKESDMIMAFSVNKANCNEIVLASTHDVQELDVTSLLACQSYIWIGEEYDRESKSSDDVDYRGSTTTLYQPSATSYSASQVHPPSSLPWLGTGQTSTGASVLMKRNLHNVKRMTSHPVHQYYLTGAQDGSVRMFEWTRPQQLVCFRQAGNARVTRLYFNSQGNKCGVADGEGFLSIWQVNQTASNPKPYMSWQCHSKATSDFAFITSSSLVATSGHSNDNRNVCLWDTLISPGNSLIHGFTCHDHGATVLQYAPKQQLLISGGRKGHVCIFDIRQRQLIHTFQAHDSAIKALALDPYEEYFTTGSAEGNIKVWRLTGHGLIHSFKSEHAKQSIFRNIGAGVMQIDIIQGNRLFSCGADGTLKTRVLPNAFNIPNRILDIL.

3 WD repeats span residues 108–145 (FLSSVTYNLAWDPQDNRLLTATDSIQLWAPPGDDILEE), 167–207 (KTSV…KSSI), and 230–278 (AHPR…EDCL). Ser326 is modified (phosphoserine). The segment at 417 to 480 (KQVDHENDDA…EGSPRTYSRL (64 aa)) is disordered. Residues 422–434 (ENDDADREDEEHS) are compositionally biased toward acidic residues. Residues 435–473 (QEDRERGLHMKLDHDLSLDRESEAGTGSSEHEDGEREGS) are compositionally biased toward basic and acidic residues. At Ser473 the chain carries Phosphoserine. One copy of the WD 4 repeat lies at 492–532 (DRKIETLLTEWNKNPDMLFTIHPVDGTFLVWHVKYLDEYNP). The residue at position 588 (Ser588) is a Phosphoserine. WD repeat units lie at residues 595–634 (HSRSHSTHMNILAPTVMMISKHIDGSLNQWAVTFADKSAF), 751–803 (LHTS…RKLL), and 878–920 (QPSQ…VQAC). The segment at 932 to 959 (SLLSVPGQKNVDSSPETSPSVSPMPHSS) is disordered. Phosphoserine occurs at positions 944 and 945. Over residues 949–959 (SPSVSPMPHSS) the composition is skewed to low complexity. Residues 1000–1037 (LSSSSIYPVCLAPYLVVTTCSDNKVRFWKCCMEANPEC) form a WD 8 repeat. Phosphoserine occurs at positions 1140, 1143, and 1151. 2 WD repeats span residues 1163–1204 (PNIK…VTEQ) and 1244–1281 (GTPSLPVSLSWVRDGILVVGMDCEMHVYAQWKHAVKFG). Residues Ser1287 and Ser1400 each carry the phosphoserine modification. Thr1417 is subject to Phosphothreonine. The residue at position 1857 (Ser1857) is a Phosphoserine. Positions 1927 to 1936 (ISHRMDDVPS) are enriched in basic and acidic residues. Positions 1927–1952 (ISHRMDDVPSHSKALSDGNGSSGIEW) are disordered. Position 1984 is a phosphoserine (Ser1984). Positions 1999 to 2033 (KSTDAREKDKQSDQKASDPNMLLTPQEEDDPEGDT) are disordered. Basic and acidic residues predominate over residues 2001–2014 (TDAREKDKQSDQKA). Residue Thr2022 is modified to Phosphothreonine. The segment covering 2024 to 2033 (QEEDDPEGDT) has biased composition (acidic residues). Positions 2122 to 2153 (GSYERHQIERRRLQAKREHAERRKSWLQKNQD) form a coiled coil. A phosphoserine mark is found at Ser2399 and Ser2640. WD repeat units lie at residues 2761 to 2800 (RNLHNVKRMTSHPVHQYYLTGAQDGSVRMFEWTRPQQLVC), 2804 to 2843 (AGNARVTRLYFNSQGNKCGVADGEGFLSIWQVNQTASNPK), 2850 to 2892 (CHSK…GNSL), 2898 to 2937 (CHDHGATVLQYAPKQQLLISGGRKGHVCIFDIRQRQLIHT), 2940 to 2979 (AHDSAIKALALDPYEEYFTTGSAEGNIKVWRLTGHGLIHS), and 2992 to 3030 (NIGAGVMQIDIIQGNRLFSCGADGTLKTRVLPNAFNIPN).

As to quaternary structure, interacts with MADD and RAB3GAP.

Its subcellular location is the cytoplasmic vesicle. The protein localises to the secretory vesicle. The protein resides in the synaptic vesicle membrane. It is found in the neuronal dense core vesicle. In terms of biological role, may serve as a scaffold protein for MADD and RAB3GA on synaptic vesicles. Plays a role in the brain as a key controller of neuronal and endocrine homeostatic processes. The protein is DmX-like protein 2 (DMXL2) of Homo sapiens (Human).